Consider the following 833-residue polypeptide: Leucine--tRNA ligase (833 aa).

The 'HIGH' region motif lies at 41–52; it reads PYPSGAGLHVGH. Positions 610–614 match the 'KMSKS' region motif; the sequence is KMSKS. K613 provides a ligand contact to ATP.

The protein belongs to the class-I aminoacyl-tRNA synthetase family.

It localises to the cytoplasm. It carries out the reaction tRNA(Leu) + L-leucine + ATP = L-leucyl-tRNA(Leu) + AMP + diphosphate. The sequence is that of Leucine--tRNA ligase from Streptococcus equi subsp. zooepidemicus (strain H70).